The chain runs to 476 residues: RNA-binding protein 45 (476 aa).

Residues 1 to 14 (MDDAGGLGGSGGFR) are compositionally biased toward gly residues. A disordered region spans residues 1–20 (MDDAGGLGGSGGFRPGVDSL). RRM domains follow at residues 26-106 (SRIF…IAQS) and 121-192 (TRIF…LAEP). Lys-34 participates in a covalent cross-link: Glycyl lysine isopeptide (Lys-Gly) (interchain with G-Cter in SUMO2). Residues 192–212 (PKNKVSGSPEQDDYSSGRQEA) are disordered. Polar residues predominate over residues 196 to 209 (VSGSPEQDDYSSGR). Residues Ser-199 and Ser-464 each carry the phosphoserine modification. The RRM 3 domain maps to 392–464 (ERLFVVFNPH…VRLKVMLADS (73 aa)).

The protein resides in the cytoplasm. Its subcellular location is the nucleus. In terms of biological role, RNA-binding protein with binding specificity for poly(C). May play an important role in neural development. This is RNA-binding protein 45 (Rbm45) from Mus musculus (Mouse).